We begin with the raw amino-acid sequence, 156 residues long: MSDSQMVIDLDVQVAVEGFELPSQAELELWVKTALRDTMSEAELTIRIVDVEESQELNMTYRGKDKPTNVLSFPFEAPPGIELPLLGDLVICAAVVEQEAIDQNKPLLAHWAHMVVHGCLHLLGYDHIEDVEAEEMESLETQLIESLGYINPYKEQ.

Zn(2+) is bound by residues His-117, His-121, and His-127.

This sequence belongs to the endoribonuclease YbeY family. The cofactor is Zn(2+).

The protein resides in the cytoplasm. In terms of biological role, single strand-specific metallo-endoribonuclease involved in late-stage 70S ribosome quality control and in maturation of the 3' terminus of the 16S rRNA. In Shewanella pealeana (strain ATCC 700345 / ANG-SQ1), this protein is Endoribonuclease YbeY.